Reading from the N-terminus, the 145-residue chain is Putative pre-16S rRNA nuclease (145 aa).

The protein belongs to the YqgF nuclease family.

The protein localises to the cytoplasm. Could be a nuclease involved in processing of the 5'-end of pre-16S rRNA. The protein is Putative pre-16S rRNA nuclease of Thiobacillus denitrificans (strain ATCC 25259 / T1).